The primary structure comprises 564 residues: Ribulokinase (564 aa).

The protein belongs to the ribulokinase family.

The enzyme catalyses D-ribulose + ATP = D-ribulose 5-phosphate + ADP + H(+). It carries out the reaction L-ribulose + ATP = L-ribulose 5-phosphate + ADP + H(+). Its pathway is carbohydrate degradation; L-arabinose degradation via L-ribulose; D-xylulose 5-phosphate from L-arabinose (bacterial route): step 2/3. This Geobacillus thermodenitrificans (strain NG80-2) protein is Ribulokinase.